We begin with the raw amino-acid sequence, 373 residues long: Saccharopine dehydrogenase [NAD(+), L-lysine-forming] (373 aa).

A2 carries the post-translational modification N-acetylalanine; partial. L-saccharopine contacts are provided by R18 and K77. The active-site Proton acceptor is K77. The active-site Proton donor is H96. Q101 provides a ligand contact to L-saccharopine. Position 130 (R130) interacts with NAD(+). Residues R131 and F135 each contribute to the L-saccharopine site. NAD(+)-binding positions include 203–204, D227, T231, Y251, and V278; that span reads GR. An intrachain disulfide couples C205 to C249. 279–281 is a binding site for L-saccharopine; it reads SAD. 318 to 321 lines the NAD(+) pocket; it reads IDHL. Residues 371-373 carry the Microbody targeting signal motif; that stretch reads SRL.

Belongs to the AlaDH/PNT family. In terms of assembly, monomer.

The protein resides in the peroxisome. It carries out the reaction L-saccharopine + NAD(+) + H2O = L-lysine + 2-oxoglutarate + NADH + H(+). It functions in the pathway amino-acid biosynthesis; L-lysine biosynthesis via AAA pathway; L-lysine from L-alpha-aminoadipate (fungal route): step 3/3. Its activity is regulated as follows. Inhibited by p-chloromercuribenzoate and iodoacetate by modification of the active site cysteine residue. Inhibited by diethyl pyrocarbonate by modification of histidine residues. Inhibited by pyridoxal 5'-phosphate by modification of an essential lysine residue. Functionally, catalyzes the NAD(+)-dependent cleavage of saccharopine to L-lysine and 2-oxoglutarate, the final step in the alpha-aminoadipate (AAA) pathway for lysine biosynthesis. The chain is Saccharopine dehydrogenase [NAD(+), L-lysine-forming] from Saccharomyces cerevisiae (strain ATCC 204508 / S288c) (Baker's yeast).